The sequence spans 133 residues: Small ribosomal subunit protein uS11 (133 aa).

Belongs to the universal ribosomal protein uS11 family. Part of the 30S ribosomal subunit. Interacts with proteins S7 and S18. Binds to IF-3.

Located on the platform of the 30S subunit, it bridges several disparate RNA helices of the 16S rRNA. Forms part of the Shine-Dalgarno cleft in the 70S ribosome. This chain is Small ribosomal subunit protein uS11, found in Bordetella avium (strain 197N).